Here is a 373-residue protein sequence, read N- to C-terminus: Glutamate 5-kinase (373 aa).

Residue K16 participates in ATP binding. The substrate site is built by S56, D143, and N155. 175–176 serves as a coordination point for ATP; it reads TD. The 79-residue stretch at 281-359 folds into the PUA domain; sequence RGVVTLDDGA…TKIETLLGYK (79 aa).

Belongs to the glutamate 5-kinase family.

The protein localises to the cytoplasm. The catalysed reaction is L-glutamate + ATP = L-glutamyl 5-phosphate + ADP. Its pathway is amino-acid biosynthesis; L-proline biosynthesis; L-glutamate 5-semialdehyde from L-glutamate: step 1/2. Functionally, catalyzes the transfer of a phosphate group to glutamate to form L-glutamate 5-phosphate. The polypeptide is Glutamate 5-kinase (Teredinibacter turnerae (strain ATCC 39867 / T7901)).